Consider the following 302-residue polypeptide: Alpha-ketoglutarate-dependent dioxygenase alkB homolog 4 (302 aa).

Ala2 bears the N-acetylalanine mark. Thr8 is subject to Phosphothreonine. The 125-residue stretch at Pro150–Ser274 folds into the Fe2OG dioxygenase domain. His169, Asp171, and His254 together coordinate Fe cation. Arg265 lines the 2-oxoglutarate pocket.

Belongs to the alkB family. Interacts with ZFHX3, MLLT3, MLLT1, HSF4, EP300, TES, EIF3C, MTMR6 and PSMA6. Fe(2+) serves as cofactor. As to expression, widely expressed, with highest expression in pancreas, ovary and spleen.

Its subcellular location is the cytoplasm. The protein resides in the nucleus. It is found in the nucleolus. The protein localises to the midbody. The catalysed reaction is an N(6)-methyl-2'-deoxyadenosine in DNA + 2-oxoglutarate + O2 = a 2'-deoxyadenosine in DNA + formaldehyde + succinate + CO2. It carries out the reaction N(6)-methyl-L-lysyl-[protein] + 2-oxoglutarate + O2 = L-lysyl-[protein] + formaldehyde + succinate + CO2. Its function is as follows. Dioxygenase that mediates demethylation of actin monomethylated at 'Lys-84' (K84me1), thereby acting as a regulator of actomyosin-processes. Demethylation of actin K84me1 is required for maintaining actomyosin dynamics supporting normal cleavage furrow ingression during cytokinesis and cell migration. In addition to proteins, also demethylates DNA: specifically demethylates DNA methylated on the 6th position of adenine (N(6)-methyladenosine) DNA, thereby regulating Polycomb silencing. The protein is Alpha-ketoglutarate-dependent dioxygenase alkB homolog 4 of Homo sapiens (Human).